We begin with the raw amino-acid sequence, 350 residues long: S-adenosylmethionine:tRNA ribosyltransferase-isomerase (350 aa).

This sequence belongs to the QueA family. As to quaternary structure, monomer.

Its subcellular location is the cytoplasm. It catalyses the reaction 7-aminomethyl-7-carbaguanosine(34) in tRNA + S-adenosyl-L-methionine = epoxyqueuosine(34) in tRNA + adenine + L-methionine + 2 H(+). It participates in tRNA modification; tRNA-queuosine biosynthesis. In terms of biological role, transfers and isomerizes the ribose moiety from AdoMet to the 7-aminomethyl group of 7-deazaguanine (preQ1-tRNA) to give epoxyqueuosine (oQ-tRNA). This is S-adenosylmethionine:tRNA ribosyltransferase-isomerase from Aliivibrio fischeri (strain MJ11) (Vibrio fischeri).